A 100-amino-acid chain; its full sequence is Large ribosomal subunit protein uL23 (100 aa).

This sequence belongs to the universal ribosomal protein uL23 family. Part of the 50S ribosomal subunit. Contacts protein L29, and trigger factor when it is bound to the ribosome.

In terms of biological role, one of the early assembly proteins it binds 23S rRNA. One of the proteins that surrounds the polypeptide exit tunnel on the outside of the ribosome. Forms the main docking site for trigger factor binding to the ribosome. This chain is Large ribosomal subunit protein uL23, found in Vibrio atlanticus (strain LGP32) (Vibrio splendidus (strain Mel32)).